Here is a 661-residue protein sequence, read N- to C-terminus: Arginine--tRNA ligase, cytoplasmic (661 aa).

Residues 1 to 72 (MEARVAEAAA…QEEQSKTVKS (72 aa)) are could be involved in the assembly of the multisynthetase complex. Residues 201–203 (SPN), H212, Y385, D389, and Q413 contribute to the L-arginine site. The 'HIGH' region motif lies at 202–213 (PNIAKEMHVGHL). The segment at 530–544 (NTAAYLLYAFTRIRA) is interaction with tRNA.

It belongs to the class-I aminoacyl-tRNA synthetase family. As to quaternary structure, monomer; also part of a multisubunit complex that groups tRNA ligases for Arg, Asp, Glu, Gln, Ile, Leu, Lys, Met and Pro.

The protein localises to the cytoplasm. It is found in the cytosol. The catalysed reaction is tRNA(Arg) + L-arginine + ATP = L-arginyl-tRNA(Arg) + AMP + diphosphate. Functionally, forms part of a macromolecular complex that catalyzes the attachment of specific amino acids to cognate tRNAs during protein synthesis. This chain is Arginine--tRNA ligase, cytoplasmic (RARS1), found in Gallus gallus (Chicken).